Consider the following 305-residue polypeptide: MSVEIDWDNIRGDLSVNQGVKDFLNSRLQEFELPSYVNNLKVTNFDLGTMPPNVILKQMDDPLDEFYSYLLQEGDISKEAAKDKNTDVQLLVELDYKGDMSIELSADLVLNYPSPQFMILPVKLRISDIGMHCLCLLAYLKKQLFISFLCDVSDPLLENDKLQVDPSGPNFMGKRALERISLIRNIKIHTELGQLDQGEGSVLRSVGKLEEFLVDLFRNLIRKEAAWPSWIDLDFTPEDPEDPEEEGRENDLVADSSNDGKDIEMKSGTEETLGAGIQESVQHVSPAVTSIDQESRVNSNTSLEE.

The SMP-LTD domain maps to 1–236 (MSVEIDWDNI…WPSWIDLDFT (236 aa)). The tract at residues 233–305 (LDFTPEDPED…RVNSNTSLEE (73 aa)) is disordered. The span at 235–248 (FTPEDPEDPEEEGR) shows a compositional bias: acidic residues. Positions 258–269 (NDGKDIEMKSGT) are enriched in basic and acidic residues. Positions 279 to 305 (ESVQHVSPAVTSIDQESRVNSNTSLEE) are enriched in polar residues.

The protein belongs to the MDM12 family. As to quaternary structure, component of the ER-mitochondria encounter structure (ERMES) or MDM complex, composed of MMM1, MDM10, MDM12 and MDM34. An MMM1 homodimer associates with one molecule of MDM12 on each side in a pairwise head-to-tail manner, and the SMP-LTD domains of MMM1 and MDM12 generate a continuous hydrophobic tunnel for phospholipid trafficking.

It localises to the mitochondrion outer membrane. Its subcellular location is the endoplasmic reticulum membrane. Component of the ERMES/MDM complex, which serves as a molecular tether to connect the endoplasmic reticulum (ER) and mitochondria. Components of this complex are involved in the control of mitochondrial shape and protein biogenesis, and function in nonvesicular lipid trafficking between the ER and mitochondria. MDM12 is required for the interaction of the ER-resident membrane protein MMM1 and the outer mitochondrial membrane-resident beta-barrel protein MDM10. The MDM12-MMM1 subcomplex functions in the major beta-barrel assembly pathway that is responsible for biogenesis of all mitochondrial outer membrane beta-barrel proteins, and acts in a late step after the SAM complex. The MDM10-MDM12-MMM1 subcomplex further acts in the TOM40-specific pathway after the action of the MDM12-MMM1 complex. Essential for establishing and maintaining the structure of mitochondria and maintenance of mtDNA nucleoids. This Kluyveromyces lactis (strain ATCC 8585 / CBS 2359 / DSM 70799 / NBRC 1267 / NRRL Y-1140 / WM37) (Yeast) protein is Mitochondrial distribution and morphology protein 12.